We begin with the raw amino-acid sequence, 632 residues long: MSASTSTSTAASQDACYISLLGLAEYFRTSQPPNIKKCIQCLQALFTFMPPSKVEARTHLQMGQILMAYTKNIDLARQHLEKAWSISEPLPNFDVKFDTASLLAQLHLQTDRNSHQAKAMLRRAVELSQNNVYWHCKLLLQLSQIHASDREYSLASELLAVGAESADEASATYLKVLFLLSRAMILMIERKTNDVLALLNSAGQIIDNNIPNPHQKEYLKVFFLVLQVCYYLALGQVKTVKPSLKQLQMSIQTIMAPNWPSDETIFGANQLEMFVWLPKEQLYVLVYLVTVSHSMMAGYMDKAQKYTEKALTQIEKLKQQEDKPILSVFKVILLEHIVMCRMVMGNRELAIREIAAARDVCMAAPQRSLLRRHSAQLHCLIGLYSMSTNLFEHAERQFVVCVSETSERDLKLFANLNLAIIYLRTKRDTDLKQILDAVSTENTHTYSSQALMGGFYYVQGLHAFHKNSFHEAKRFLRETLKMANAEDLNRLTSCSLVLLSHVFLSIGNSKESMNMVTPAMQLASKIPDIHVQLWGSAILKDLHRMSKDVQHEKDAYANHVKYSENLIADQRKCVQSAHHELVNWFQGDPPVTSGPPAAPVLLMPESSVTASVPVIASTSAAMQPAGQYGQFY.

TPR repeat units follow at residues 453–486 (GGFY…ANAE) and 493–526 (SCSL…ASKI).

The protein belongs to the SCC4/mau-2 family. Interacts with Nipped-B to form the cohesin loading complex.

The protein resides in the nucleus. It localises to the nucleoplasm. In terms of biological role, required for association of the cohesin complex with chromatin during interphase. Plays a role in sister chromatid cohesion and normal progression through prometaphase. This is MAU2 chromatid cohesion factor homolog from Drosophila simulans (Fruit fly).